The chain runs to 492 residues: Heat shock factor protein 4 (492 aa).

A DNA-binding region spans residues V17–V121. The hydrophobic repeat HR-A/B stretch occupies residues G129–A203. The segment at L245–P322 is interactions with DUSP26, MAPK1 and MAPK2. The segment at P246–R285 is disordered. K293 is covalently cross-linked (Glycyl lysine isopeptide (Lys-Gly) (interchain with G-Cter in SUMO)). The residue at position 298 (S298) is a Phosphoserine. A disordered region spans residues G337–P400. A hydrophobic repeat HR-C region spans residues L364–V389. Over residues E374–S388 the composition is skewed to low complexity.

The protein belongs to the HSF family. As to quaternary structure, homotrimer. Exhibits constitutive DNA binding and forms trimers even in the absence of stress. Interacts with ALKBH4, DUSP26, MAPK1, MAPK2, MAPK8 and MAP kinase p38. Phosphorylated mainly on serine residues. Phosphorylation on Ser-298 promotes sumoylation on Lys-293. In terms of processing, isoform HSF4B is constitutively sumoylated. Sumoylation represses the transcriptional activity and is promoted by phosphorylation on Ser-298. HSFA is not sumoylated. As to expression, expressed in heart, skeletal muscle, eye and brain, and at much lower levels in some other tissues.

The protein resides in the nucleus. Heat-shock transcription factor that specifically binds heat shock promoter elements (HSE). Required for denucleation and organelle rupture and degradation that occur during eye lens terminal differentiation, when fiber cells that compose the lens degrade all membrane-bound organelles in order to provide lens with transparency to allow the passage of light. In this process, may regulate denucleation of lens fiber cells in part by activating DNASE2B transcription. May be involved in DNA repair through the transcriptional regulation of RAD51. May up-regulate p53/TP53 protein in eye lens fiber cells, possibly through protein stabilization. In the eye lens, controls the expression of alpha-crystallin B chain/CRYAB and consequently may be involved in the regulation of lysosomal acidification. Its function is as follows. Transcriptional repressor. Functionally, transcriptional activator. In Homo sapiens (Human), this protein is Heat shock factor protein 4 (HSF4).